The sequence spans 427 residues: 3-phosphoshikimate 1-carboxyvinyltransferase (427 aa).

3-phosphoshikimate-binding residues include Lys22, Ser23, and Arg27. Lys22 is a phosphoenolpyruvate binding site. Phosphoenolpyruvate is bound by residues Gly96 and Arg124. The 3-phosphoshikimate site is built by Ser169, Ser170, Gln171, Ser197, Asp313, Asn336, and Lys340. Phosphoenolpyruvate is bound at residue Gln171. Asp313 functions as the Proton acceptor in the catalytic mechanism. Phosphoenolpyruvate contacts are provided by Arg344, Arg386, and Lys411.

Belongs to the EPSP synthase family. Monomer.

The protein localises to the cytoplasm. It carries out the reaction 3-phosphoshikimate + phosphoenolpyruvate = 5-O-(1-carboxyvinyl)-3-phosphoshikimate + phosphate. The protein operates within metabolic intermediate biosynthesis; chorismate biosynthesis; chorismate from D-erythrose 4-phosphate and phosphoenolpyruvate: step 6/7. Catalyzes the transfer of the enolpyruvyl moiety of phosphoenolpyruvate (PEP) to the 5-hydroxyl of shikimate-3-phosphate (S3P) to produce enolpyruvyl shikimate-3-phosphate and inorganic phosphate. This is 3-phosphoshikimate 1-carboxyvinyltransferase from Enterobacter sp. (strain 638).